The following is a 356-amino-acid chain: Acyl-coenzyme A diphosphatase NUDT19 (356 aa).

In terms of domain architecture, Nudix hydrolase spans 10–241 (AATVMLAAGW…IWLAPPQFYE (232 aa)). The disordered stretch occupies residues 72 to 94 (PRFGLGPEPPRQPPFPGLSHGDA). The span at 78–87 (PEPPRQPPFP) shows a compositional bias: pro residues. A Nudix box motif is present at residues 97–118 (AALPDDVALRICAIRETFEEAG). The Mg(2+) site is built by E112 and E116. K299 is subject to N6-succinyllysine. The short motif at 354–356 (ARL) is the Microbody targeting signal element.

This sequence belongs to the Nudix hydrolase family. Monomer. Mg(2+) serves as cofactor. Requires Mn(2+) as cofactor.

Its subcellular location is the peroxisome. It carries out the reaction an acyl-CoA + H2O = an acyl-4'-phosphopantetheine + adenosine 3',5'-bisphosphate + 2 H(+). The enzyme catalyses CoA + H2O = (R)-4'-phosphopantetheine + adenosine 3',5'-bisphosphate + 2 H(+). The catalysed reaction is hexanoyl-CoA + H2O = hexanoyl-4'-phosphopantetheine + adenosine 3',5'-bisphosphate + 2 H(+). It catalyses the reaction octanoyl-CoA + H2O = S-octanoyl-4'-phosphopantetheine + adenosine 3',5'-bisphosphate + 2 H(+). It carries out the reaction butanoyl-CoA + H2O = S-butanoyl-4'-phosphopantetheine + adenosine 3',5'-bisphosphate + 2 H(+). The enzyme catalyses propanoyl-CoA + H2O = propanoyl-4'-phosphopantetheine + adenosine 3',5'-bisphosphate + 2 H(+). The catalysed reaction is malonyl-CoA + H2O = malonyl-4'-phosphopantetheine + adenosine 3',5'-bisphosphate + 2 H(+). It catalyses the reaction succinyl-CoA + H2O = succinyl-4'-phosphopantetheine + adenosine 3',5'-bisphosphate + 2 H(+). It carries out the reaction choloyl-CoA + H2O = S-choloyl-4'-phosphopantetheine + adenosine 3',5'-bisphosphate + 2 H(+). The enzyme catalyses 4,8-dimethylnonanoyl-CoA + H2O = S-(4,8-dimethylnonanoyl)-4'-phosphopantetheine + adenosine 3',5'-bisphosphate + 2 H(+). The catalysed reaction is (9Z,12Z,15Z)-octadecatrienoyl-CoA + H2O = S-(9Z,12Z,15Z-octadecatrienoyl)-4'-phosphopantetheine + adenosine 3',5'-bisphosphate + 2 H(+). It catalyses the reaction (9Z,12Z)-octadecadienoyl-CoA + H2O = S-(9Z,12Z-octadecadienoyl)-4'-phosphopantetheine + adenosine 3',5'-bisphosphate + 2 H(+). It carries out the reaction (9Z)-hexadecenoyl-CoA + H2O = S-(9Z-hexadecenoyl)-4'-phosphopantetheine + adenosine 3',5'-bisphosphate + 2 H(+). The enzyme catalyses (9Z)-tetradecenoyl-CoA + H2O = S-(9Z-tetradecenoyl)-4'-phosphopantetheine + adenosine 3',5'-bisphosphate + 2 H(+). The catalysed reaction is (6Z)-octenoyl-CoA + H2O = S-(6Z-octenoyl)-4'-phosphopantetheine + adenosine 3',5'-bisphosphate + 2 H(+). It catalyses the reaction hexadecanoyl-CoA + H2O = S-hexadecanoyl-4'-phosphopantetheine + adenosine 3',5'-bisphosphate + 2 H(+). It carries out the reaction tetradecanoyl-CoA + H2O = tetradecanoyl-4'-phosphopantetheine + adenosine 3',5'-bisphosphate + 2 H(+). The enzyme catalyses dodecanoyl-CoA + H2O = S-dodecanoyl-4'-phosphopantetheine + adenosine 3',5'-bisphosphate + 2 H(+). The catalysed reaction is a 5'-end CoA-ribonucleoside in mRNA + H2O = a 5'-end phospho-adenosine-phospho-ribonucleoside in mRNA + (R)-4'-phosphopantetheine + 2 H(+). In terms of biological role, fatty acyl-coenzyme A (CoA) diphosphatase that hydrolyzes fatty acyl-CoA to yield acyl-4'-phosphopantetheine and adenosine 3',5'-bisphosphate. Mediates the hydrolysis of a wide range of CoA esters, including choloyl-CoA and branched-chain fatty-acyl-CoA esters and at low substrate concentrations medium and long-chain fatty-acyl-CoA esters are the primary substrates. Highest activity seen with medium-chain acyl-CoA esters and higher rates of activity seen with the unsaturated acyl-CoA esters compared with the saturated esters. Exhibits decapping activity towards dpCoA-capped RNAs in vitro. The protein is Acyl-coenzyme A diphosphatase NUDT19 (Nudt19) of Mus saxicola (Brown spiny mouse).